The chain runs to 474 residues: ERO1-like protein alpha (474 aa).

An N-terminal signal peptide occupies residues 1 to 29 (MVSGCCRLDMSSYVSVLVLCSLLLWGSNS). 8 disulfide bridges follow: C40–C53, C42–C51, C90–C398, C99–C104, C99–C138, C104–C109, C215–C248, and C401–C404. Residues R194, T196, and W207 each coordinate FAD. 4 residues coordinate FAD: S259, H262, R294, and R307. N-linked (GlcNAc...) asparagine glycans are attached at residues N340 and N391. N430 is a glycosylation site (N-linked (GlcNAc...) asparagine).

This sequence belongs to the EROs family. In terms of assembly, predominantly monomer. May function both as a monomer and a homodimer. FAD is required as a cofactor. Post-translationally, the Cys-99/Cys-104 and Cys-401/Cys-404 disulfide bonds constitute the redox-active center. The Cys-99/Cys-104 disulfide bond may accept electron from protein disulfide isomerase (PDI) and funnel them to the active site disulfide Cys-401/Cys-404.

The protein localises to the endoplasmic reticulum membrane. Enzyme activity is tightly regulated to prevent the accumulation of reactive oxygen species in the endoplasmic reticulum. Reversibly down-regulated by the formation of disulfide bonds between the active site Cys-99 and Cys-138, and between Cys-104 and Cys-109. Glutathione may be required to regulate its activity in the endoplasmic reticulum. In terms of biological role, oxidoreductase involved in disulfide bond formation in the endoplasmic reticulum. Efficiently reoxidizes P4HB/PDI, the enzyme catalyzing protein disulfide formation, in order to allow P4HB to sustain additional rounds of disulfide formation. Following P4HB reoxidation, passes its electrons to molecular oxygen via FAD, leading to the production of reactive oxygen species (ROS) in the cell. Required for the folding of immunoglobulins. The polypeptide is ERO1-like protein alpha (Xenopus tropicalis (Western clawed frog)).